A 1375-amino-acid chain; its full sequence is DNA-directed RNA polymerase subunit beta (1375 aa).

The protein belongs to the RNA polymerase beta chain family. As to quaternary structure, the RNAP catalytic core consists of 2 alpha, 1 beta, 1 beta' and 1 omega subunit. When a sigma factor is associated with the core the holoenzyme is formed, which can initiate transcription.

It catalyses the reaction RNA(n) + a ribonucleoside 5'-triphosphate = RNA(n+1) + diphosphate. DNA-dependent RNA polymerase catalyzes the transcription of DNA into RNA using the four ribonucleoside triphosphates as substrates. The protein is DNA-directed RNA polymerase subunit beta of Coxiella burnetii (strain Dugway 5J108-111).